The following is a 299-amino-acid chain: Dihydroorotate dehydrogenase B (NAD(+)), catalytic subunit (299 aa).

Residues serine 21 and 44–45 (KS) each bind FMN. Substrate is bound by residues lysine 44, 68–72 (NAVGL), and asparagine 125. Asparagine 125 is an FMN binding site. The active-site Nucleophile is the cysteine 128. Position 163 (lysine 163) interacts with FMN. 189 to 190 (NT) contributes to the substrate binding site. Residues glycine 214, 240 to 241 (GG), and 262 to 263 (GS) contribute to the FMN site.

This sequence belongs to the dihydroorotate dehydrogenase family. Type 1 subfamily. As to quaternary structure, heterotetramer of 2 PyrK and 2 PyrD type B subunits. It depends on FMN as a cofactor.

It is found in the cytoplasm. The catalysed reaction is (S)-dihydroorotate + NAD(+) = orotate + NADH + H(+). It functions in the pathway pyrimidine metabolism; UMP biosynthesis via de novo pathway; orotate from (S)-dihydroorotate (NAD(+) route): step 1/1. Its function is as follows. Catalyzes the conversion of dihydroorotate to orotate with NAD(+) as electron acceptor. This Archaeoglobus fulgidus (strain ATCC 49558 / DSM 4304 / JCM 9628 / NBRC 100126 / VC-16) protein is Dihydroorotate dehydrogenase B (NAD(+)), catalytic subunit (pyrD).